The chain runs to 185 residues: Ribosome-recycling factor (185 aa).

This sequence belongs to the RRF family.

It localises to the cytoplasm. Its function is as follows. Responsible for the release of ribosomes from messenger RNA at the termination of protein biosynthesis. May increase the efficiency of translation by recycling ribosomes from one round of translation to another. The polypeptide is Ribosome-recycling factor (Hydrogenovibrio crunogenus (strain DSM 25203 / XCL-2) (Thiomicrospira crunogena)).